Consider the following 607-residue polypeptide: uncharacterized protein (607 aa).

2 disordered regions span residues 28–114 (GAER…KLRR) and 142–188 (DQER…NNSS). Polar residues predominate over residues 35–50 (SSHGSINSRSASPNKA). Basic and acidic residues-rich tracts occupy residues 90 to 102 (VNGE…DHDT) and 161 to 174 (KENK…KDLS). The span at 177-188 (SSSSMKKANNSS) shows a compositional bias: low complexity. 2 PHD-type zinc fingers span residues 263–312 (NDYC…CKHH) and 406–459 (PILC…HSDH).

This is an uncharacterized protein from Schizosaccharomyces pombe (strain 972 / ATCC 24843) (Fission yeast).